The following is a 173-amino-acid chain: Transmembrane protein 240 (173 aa).

2 helical membrane-spanning segments follow: residues 5–25 (ANTM…ACLM) and 90–110 (LMLG…MDGV). Ser-169 is subject to Phosphoserine.

The protein resides in the synapse. It is found in the cell membrane. This is Transmembrane protein 240 (Tmem240) from Mus musculus (Mouse).